The primary structure comprises 467 residues: Protection of telomeres protein 1a (467 aa).

It belongs to the telombin family. As to quaternary structure, component of the telomerase holoenzyme complex at least composed of TERT, CBF5 and POT1a. The RNA molecule associated to the telomerase complex, and providing a template for telomeric DNA synthesis, is most likely TR and not TER1 as described previously. Interacts with the N-terminal part of TERT. Interacts with CBF5. Interacts with CTC1 and STN1. Does not interact with TEN1. As to expression, expressed in roots, rosette leaves, cauline leaves, stems and flowers.

The protein resides in the nucleus. Its subcellular location is the chromosome. The protein localises to the telomere. It is found in the nucleolus. It localises to the cytoplasm. Component of the telomerase ribonucleoprotein (RNP) complex that is essential for the positive regulation of telomere length. Binds RNA non-specifically. Binds specifically single-stranded telomeric DNA. Not required to recruit telomerase to telomeres, but stimulates TER1 RNP repeat addition processivity. This is Protection of telomeres protein 1a from Arabidopsis thaliana (Mouse-ear cress).